A 468-amino-acid chain; its full sequence is Soluble pyridine nucleotide transhydrogenase (468 aa).

38-47 serves as a coordination point for FAD; the sequence is ERHYNVGGGC.

It belongs to the class-I pyridine nucleotide-disulfide oxidoreductase family. It depends on FAD as a cofactor.

The protein localises to the cytoplasm. It carries out the reaction NAD(+) + NADPH = NADH + NADP(+). Functionally, conversion of NADPH, generated by peripheral catabolic pathways, to NADH, which can enter the respiratory chain for energy generation. In Pectobacterium atrosepticum (strain SCRI 1043 / ATCC BAA-672) (Erwinia carotovora subsp. atroseptica), this protein is Soluble pyridine nucleotide transhydrogenase.